Reading from the N-terminus, the 573-residue chain is Probable D-xylulose kinase A (573 aa).

4 residues coordinate substrate: His97, Arg168, Asp284, and Asn285. Residues Trp366, 471 to 472 (GG), and Asn475 contribute to the ATP site.

The protein belongs to the FGGY kinase family.

The protein localises to the cytoplasm. It carries out the reaction D-xylulose + ATP = D-xylulose 5-phosphate + ADP + H(+). Functionally, highly specific D-xylulose kinase which participates in the catabolism of xylose. Xylose is a major component of hemicelluloses such as xylan. Most fungi utilize D-xylose via three enzymatic reactions, xylose reductase (XR), xylitol dehydrogenase (XDH), and xylulokinase, to form xylulose 5-phosphate, which enters pentose phosphate pathway. This is Probable D-xylulose kinase A (xkiA) from Neosartorya fischeri (strain ATCC 1020 / DSM 3700 / CBS 544.65 / FGSC A1164 / JCM 1740 / NRRL 181 / WB 181) (Aspergillus fischerianus).